The sequence spans 193 residues: Holliday junction branch migration complex subunit RuvA (193 aa).

Positions 1–63 (MIGKLTGTVT…ENINKLYGFE (63 aa)) are domain I. Residues 64–148 (CRKSQEVARM…GIASSTNVHI (85 aa)) are domain II. The interval 149-150 (AS) is flexible linker. A domain III region spans residues 150-193 (SEAVSALVKLGFQHKPSHKVVMEIMTKRPAIEIAELITLALKML).

Belongs to the RuvA family. In terms of assembly, homotetramer. Forms an RuvA(8)-RuvB(12)-Holliday junction (HJ) complex. HJ DNA is sandwiched between 2 RuvA tetramers; dsDNA enters through RuvA and exits via RuvB. An RuvB hexamer assembles on each DNA strand where it exits the tetramer. Each RuvB hexamer is contacted by two RuvA subunits (via domain III) on 2 adjacent RuvB subunits; this complex drives branch migration. In the full resolvosome a probable DNA-RuvA(4)-RuvB(12)-RuvC(2) complex forms which resolves the HJ.

It localises to the cytoplasm. The RuvA-RuvB-RuvC complex processes Holliday junction (HJ) DNA during genetic recombination and DNA repair, while the RuvA-RuvB complex plays an important role in the rescue of blocked DNA replication forks via replication fork reversal (RFR). RuvA specifically binds to HJ cruciform DNA, conferring on it an open structure. The RuvB hexamer acts as an ATP-dependent pump, pulling dsDNA into and through the RuvAB complex. HJ branch migration allows RuvC to scan DNA until it finds its consensus sequence, where it cleaves and resolves the cruciform DNA. The polypeptide is Holliday junction branch migration complex subunit RuvA (Neorickettsia sennetsu (strain ATCC VR-367 / Miyayama) (Ehrlichia sennetsu)).